The following is a 230-amino-acid chain: Cytidylate kinase (230 aa).

12 to 20 (GPSGAGKGT) serves as a coordination point for ATP.

The protein belongs to the cytidylate kinase family. Type 1 subfamily.

The protein resides in the cytoplasm. It carries out the reaction CMP + ATP = CDP + ADP. It catalyses the reaction dCMP + ATP = dCDP + ADP. The polypeptide is Cytidylate kinase (Shewanella sediminis (strain HAW-EB3)).